A 277-amino-acid chain; its full sequence is Large ribosomal subunit protein uL2 (277 aa).

The disordered stretch occupies residues 222–277 (GSVMNPNDHPHGGGEGKAPVGRKAPSTPWGKPALGLKTRNKKAKSDKLIVRRRNQK).

Belongs to the universal ribosomal protein uL2 family. Part of the 50S ribosomal subunit. Forms a bridge to the 30S subunit in the 70S ribosome.

In terms of biological role, one of the primary rRNA binding proteins. Required for association of the 30S and 50S subunits to form the 70S ribosome, for tRNA binding and peptide bond formation. It has been suggested to have peptidyltransferase activity; this is somewhat controversial. Makes several contacts with the 16S rRNA in the 70S ribosome. This is Large ribosomal subunit protein uL2 from Streptococcus agalactiae serotype Ia (strain ATCC 27591 / A909 / CDC SS700).